The following is a 154-amino-acid chain: Ribosome maturation factor RimP (154 aa).

The protein belongs to the RimP family.

Its subcellular location is the cytoplasm. Its function is as follows. Required for maturation of 30S ribosomal subunits. This is Ribosome maturation factor RimP from Prochlorococcus marinus (strain MIT 9313).